Consider the following 504-residue polypeptide: Glucosaminyl-phosphatidylinositol-acyltransferase PIGW (504 aa).

The Lumenal portion of the chain corresponds to 1–21 (MSEKQMKEAFVSNLNGTTVLE). A glycan (N-linked (GlcNAc...) asparagine) is linked at N15. A helical membrane pass occupies residues 22–42 (ITQGLCFPAFCILCRGFLIIF). Residues 43–56 (SQYLCSFSPTWKTR) are Cytoplasmic-facing. A helical transmembrane segment spans residues 57 to 75 (FLTDFVVLIVPMVATLTIW). The Lumenal segment spans residues 76–81 (ASFILL). The helical transmembrane segment at 82–98 (ELLGVIIFGAGLLYQIY) threads the bilayer. The Cytoplasmic portion of the chain corresponds to 99–131 (RRRTCYARLPFLKILEKFLNISLESEYNPAISC). The chain crosses the membrane as a helical span at residues 132–152 (FRVITSAFTAIAILAVDFPLF). Residues 153–162 (PRRFAKTELY) lie on the Lumenal side of the membrane. Residues 163 to 183 (GTGAMDFGVGGFVFGSAMVCL) form a helical membrane-spanning segment. The Cytoplasmic portion of the chain corresponds to 184 to 202 (EVRRRKYMEGSKLHYFTNS). A helical membrane pass occupies residues 203-223 (LYSVWPLVFLGIGRLAIIKSI). Over 224–237 (GYQEHLTEYGVHWN) the chain is Lumenal. The helical transmembrane segment at 238–258 (FFFTIIVVKLITPLLLIIFPL) threads the bilayer. The Cytoplasmic segment spans residues 259-260 (NK). A helical transmembrane segment spans residues 261–281 (SWIIALGITVLYQLALDFTSL). The Lumenal portion of the chain corresponds to 282–305 (KRLILYGTDGSGTRVGLLNANREG). A helical transmembrane segment spans residues 306–326 (IISTLGYVAIHMAGVQTGLYM). Residues 327 to 338 (HKNRSHIKDLIK) are Cytoplasmic-facing. Residues 339–359 (VACFLLLAAISLFISLYVVQV) form a helical membrane-spanning segment. The Lumenal portion of the chain corresponds to 360 to 370 (NVEAVSRRMAN). Residues 371–391 (LAFCIWIVASSLILLSSLLLG) form a helical membrane-spanning segment. At 392–448 (DIILSFAKFLIKGALVPCSWKLIQSPVTNKKHSESLVPEAERMEPSLCLITALNRKQ) the chain is on the cytoplasmic side. At S416 the chain carries Phosphoserine. Residues 449–469 (LIFFLLSNITTGLINLMVDTL) form a helical membrane-spanning segment. The Lumenal portion of the chain corresponds to 470-473 (HSST). A helical transmembrane segment spans residues 474–494 (LWALFVVNLYMFSNCLIVYVL). The Cytoplasmic portion of the chain corresponds to 495–504 (YLQDKTVQFW).

It belongs to the PIGW family.

It localises to the endoplasmic reticulum membrane. It functions in the pathway glycolipid biosynthesis; glycosylphosphatidylinositol-anchor biosynthesis. Its function is as follows. Acyltransferase that catalyzes the acyl transfer from an acyl-CoA at the 2-OH position of the inositol ring of glucosaminyl phosphatidylinositol (GlcN-PI) to generate glucosaminyl acyl phosphatidylinositol (GlcN-(acyl)PI) and participates in the fourth step of GPI-anchor biosynthesis. Required for the transport of GPI-anchored proteins to the plasma membrane. Acetylation during GPI-anchor biosynthesis is not essential for the subsequent mannosylation and is usually removed soon after the attachment of GPIs to proteins. In Homo sapiens (Human), this protein is Glucosaminyl-phosphatidylinositol-acyltransferase PIGW.